The primary structure comprises 344 residues: Dihydroorotase (344 aa).

The Zn(2+) site is built by His-13 and His-15. Substrate-binding positions include 15–17 (HLR) and Asn-41. Zn(2+) is bound by residues Lys-99, His-136, and His-174. Position 99 is an N6-carboxylysine (Lys-99). His-136 provides a ligand contact to substrate. Substrate is bound at residue Leu-219. Residue Asp-247 participates in Zn(2+) binding. Asp-247 is a catalytic residue. Substrate contacts are provided by His-251 and Ala-263.

Belongs to the metallo-dependent hydrolases superfamily. DHOase family. Class II DHOase subfamily. As to quaternary structure, homodimer. Zn(2+) serves as cofactor.

It catalyses the reaction (S)-dihydroorotate + H2O = N-carbamoyl-L-aspartate + H(+). It functions in the pathway pyrimidine metabolism; UMP biosynthesis via de novo pathway; (S)-dihydroorotate from bicarbonate: step 3/3. Catalyzes the reversible cyclization of carbamoyl aspartate to dihydroorotate. This is Dihydroorotase from Acinetobacter baumannii (strain SDF).